The primary structure comprises 177 residues: Large ribosomal subunit protein uL6 (177 aa).

The protein belongs to the universal ribosomal protein uL6 family. As to quaternary structure, part of the 50S ribosomal subunit.

Functionally, this protein binds to the 23S rRNA, and is important in its secondary structure. It is located near the subunit interface in the base of the L7/L12 stalk, and near the tRNA binding site of the peptidyltransferase center. This is Large ribosomal subunit protein uL6 from Cupriavidus taiwanensis (strain DSM 17343 / BCRC 17206 / CCUG 44338 / CIP 107171 / LMG 19424 / R1) (Ralstonia taiwanensis (strain LMG 19424)).